We begin with the raw amino-acid sequence, 301 residues long: Ornithine carbamoyltransferase (301 aa).

Carbamoyl phosphate-binding positions include Arg100 and 127-130 (HPCQ). L-ornithine contacts are provided by residues Asn158, Asp221, and 225–226 (SM). The carbamoyl phosphate site is built by Cys260 and Arg288.

Belongs to the aspartate/ornithine carbamoyltransferase superfamily. OTCase family.

It localises to the cytoplasm. It catalyses the reaction carbamoyl phosphate + L-ornithine = L-citrulline + phosphate + H(+). It functions in the pathway amino-acid biosynthesis; L-arginine biosynthesis; L-arginine from L-ornithine and carbamoyl phosphate: step 1/3. Functionally, reversibly catalyzes the transfer of the carbamoyl group from carbamoyl phosphate (CP) to the N(epsilon) atom of ornithine (ORN) to produce L-citrulline. In Vibrio sp. (strain 2693), this protein is Ornithine carbamoyltransferase (argF).